Consider the following 388-residue polypeptide: MNLHEYQAKSLFAEYGLPVSEGFACDTAQEAVEAAGHIGGDMWVVKCQVHAGGRGKAGGVKVTGDKNEIRAFAEHWLGKNLVTYQTDEKGQPVAKILVESCTDIANELYLGAVVDRASRRVVFMASTEGGVEIETVAEETPELIHKAIIDPLAGPQPYQARDLGFKLGLNPTQLKQFTKVFMGLAKMFEDHDFALLEINPLVITDEGNIHCLDGKIGIDGNALYRQPKIREMHDPSQDDAREAHAAKFELNYVALDGNVGCMVNGAGLAMGTMDIVNLHGGKPANFLDVGGGATKERVAEAFKIILSDDNVKAVLVNIFGGIVRCDMIAEGIIGAVKEVGVTVPVVVRLEGTNADLGREVLANSDLDIIAATSLTDAAEQVVKAAEGK.

The ATP-grasp domain maps to 9-244 (KSLFAEYGLP…PSQDDAREAH (236 aa)). ATP contacts are provided by residues Lys-46, 53-55 (GRG), Glu-99, Thr-102, and Glu-107. 2 residues coordinate Mg(2+): Asn-199 and Asp-213. Residues Asn-264 and 321–323 (GIV) contribute to the substrate site.

It belongs to the succinate/malate CoA ligase beta subunit family. In terms of assembly, heterotetramer of two alpha and two beta subunits. Mg(2+) serves as cofactor.

It carries out the reaction succinate + ATP + CoA = succinyl-CoA + ADP + phosphate. The enzyme catalyses GTP + succinate + CoA = succinyl-CoA + GDP + phosphate. Its pathway is carbohydrate metabolism; tricarboxylic acid cycle; succinate from succinyl-CoA (ligase route): step 1/1. Its function is as follows. Succinyl-CoA synthetase functions in the citric acid cycle (TCA), coupling the hydrolysis of succinyl-CoA to the synthesis of either ATP or GTP and thus represents the only step of substrate-level phosphorylation in the TCA. The beta subunit provides nucleotide specificity of the enzyme and binds the substrate succinate, while the binding sites for coenzyme A and phosphate are found in the alpha subunit. This Shewanella woodyi (strain ATCC 51908 / MS32) protein is Succinate--CoA ligase [ADP-forming] subunit beta.